The following is a 251-amino-acid chain: Flap endonuclease Xni (251 aa).

Asp104 serves as a coordination point for Mg(2+). The 91-residue stretch at 160–250 (VQPQQLPDYW…DGNLQQLRLK (91 aa)) folds into the 5'-3' exonuclease domain. Leu171, Ala172, Pro180, Val182, and Ile185 together coordinate K(+). Positions 184–189 (GIGPKS) are interaction with DNA.

Belongs to the Xni family. Mg(2+) is required as a cofactor. The cofactor is K(+).

Functionally, has flap endonuclease activity. During DNA replication, flap endonucleases cleave the 5'-overhanging flap structure that is generated by displacement synthesis when DNA polymerase encounters the 5'-end of a downstream Okazaki fragment. This chain is Flap endonuclease Xni, found in Escherichia fergusonii (strain ATCC 35469 / DSM 13698 / CCUG 18766 / IAM 14443 / JCM 21226 / LMG 7866 / NBRC 102419 / NCTC 12128 / CDC 0568-73).